The following is a 611-amino-acid chain: Aspartate--tRNA ligase, mitochondrial (611 aa).

The N-terminal 30 residues, 1-30 (MVLSRLPACLLPLVGTKVSIQGWLVATSRQ), are a transit peptide targeting the mitochondrion. Position 192 (glutamate 192) interacts with L-aspartate. The tract at residues 216–219 (QQYK) is aspartate. Arginine 238 is an L-aspartate binding site. ATP is bound by residues 238–240 (RDE) and glutamate 502. An L-aspartate-binding site is contributed by arginine 509. 554-557 (GFDR) serves as a coordination point for ATP.

This sequence belongs to the class-II aminoacyl-tRNA synthetase family. Type 1 subfamily.

The protein localises to the mitochondrion. It catalyses the reaction tRNA(Asp) + L-aspartate + ATP = L-aspartyl-tRNA(Asp) + AMP + diphosphate. The protein is Aspartate--tRNA ligase, mitochondrial (msd1) of Schizosaccharomyces pombe (strain 972 / ATCC 24843) (Fission yeast).